Here is a 227-residue protein sequence, read N- to C-terminus: UPF0173 metal-dependent hydrolase SSO0099 (227 aa).

The protein belongs to the UPF0173 family.

This Saccharolobus solfataricus (strain ATCC 35092 / DSM 1617 / JCM 11322 / P2) (Sulfolobus solfataricus) protein is UPF0173 metal-dependent hydrolase SSO0099.